Here is a 505-residue protein sequence, read N- to C-terminus: Retinoic acid receptor gamma (505 aa).

2 disordered regions span residues 1-57 (MMKF…SSKD) and 113-134 (SLSV…PSPP). Basic and acidic residues-rich tracts occupy residues 12–22 (DGGERPEEEGK) and 32–46 (MGKE…KEEA). The segment at 52–142 (MSSSKDRICS…PPPPPRVYKP (91 aa)) is modulating. Over residues 115–124 (SVETQSTSSE) the composition is skewed to polar residues. 2 consecutive NR C4-type zinc fingers follow at residues 143–163 (CFVC…CEGC) and 179–203 (CHRD…LQKC). A DNA-binding region (nuclear receptor) is located at residues 143–208 (CFVCNDKSSG…RLQKCFEVGM (66 aa)). The hinge stretch occupies residues 209–237 (SKEAVRNDRNKKKKEIKEEVVTDSYEMPP). The 235-residue stretch at 238–472 (EMEALIQKVS…PLIREMLENP (235 aa)) folds into the NR LBD domain. The tract at residues 462 to 505 (PPLIREMLENPEAFEDDASPPPKSEQKPIKVEEKPGEKTSTKDP) is disordered. Over residues 485–505 (SEQKPIKVEEKPGEKTSTKDP) the composition is skewed to basic and acidic residues.

Belongs to the nuclear hormone receptor family. NR1 subfamily. Heterodimer; with a RXR molecule. Binds DNA preferentially as a RAR/RXR heterodimer. Isoform Delta-1A and Isoform Delta-1B are most abundant in regenerating limbs, tails, and the anterior half of the lower jaw. Isoform Delta-2 is broadly and uniformly distributed.

Its subcellular location is the nucleus. Its function is as follows. Receptor for retinoic acid. Retinoic acid receptors bind as heterodimers to their target response elements in response to their ligands, all-trans or 9-cis retinoic acid, and regulate gene expression in various biological processes. The RAR/RXR heterodimers bind to the retinoic acid response elements (RARE) composed of tandem 5'-AGGTCA-3' sites known as DR1-DR5. The sequence is that of Retinoic acid receptor gamma (RARG) from Notophthalmus viridescens (Eastern newt).